Here is a 199-residue protein sequence, read N- to C-terminus: Recombination protein RecR (199 aa).

A C4-type zinc finger spans residues 57 to 72 (CQSCRTYTEESLCPIC). A Toprim domain is found at 81-176 (STICVVETPA…VISRIAHGVP (96 aa)).

Belongs to the RecR family.

In terms of biological role, may play a role in DNA repair. It seems to be involved in an RecBC-independent recombinational process of DNA repair. It may act with RecF and RecO. This is Recombination protein RecR from Shewanella sp. (strain ANA-3).